The chain runs to 103 residues: Turripeptide OL55-like (103 aa).

In terms of processing, contains 8 disulfide bonds. As to expression, expressed by the venom duct.

Its subcellular location is the secreted. Functionally, acts as a neurotoxin by inhibiting an ion channel. The sequence is that of Turripeptide OL55-like from Lophiotoma albina (Sea snail).